A 252-amino-acid polypeptide reads, in one-letter code: 5'-nucleotidase SurE (252 aa).

A divalent metal cation is bound by residues aspartate 8, aspartate 9, serine 39, and asparagine 95.

It belongs to the SurE nucleotidase family. The cofactor is a divalent metal cation.

Its subcellular location is the cytoplasm. The catalysed reaction is a ribonucleoside 5'-phosphate + H2O = a ribonucleoside + phosphate. Its function is as follows. Nucleotidase that shows phosphatase activity on nucleoside 5'-monophosphates. This chain is 5'-nucleotidase SurE, found in Clostridium botulinum (strain Loch Maree / Type A3).